We begin with the raw amino-acid sequence, 264 residues long: Methionine aminopeptidase (264 aa).

A substrate-binding site is contributed by H79. A divalent metal cation contacts are provided by D97, D108, and H171. Residue H178 coordinates substrate. Positions 204 and 235 each coordinate a divalent metal cation.

This sequence belongs to the peptidase M24A family. Methionine aminopeptidase type 1 subfamily. As to quaternary structure, monomer. Requires Co(2+) as cofactor. It depends on Zn(2+) as a cofactor. Mn(2+) is required as a cofactor. The cofactor is Fe(2+).

The catalysed reaction is Release of N-terminal amino acids, preferentially methionine, from peptides and arylamides.. Functionally, removes the N-terminal methionine from nascent proteins. The N-terminal methionine is often cleaved when the second residue in the primary sequence is small and uncharged (Met-Ala-, Cys, Gly, Pro, Ser, Thr, or Val). Requires deformylation of the N(alpha)-formylated initiator methionine before it can be hydrolyzed. In Buchnera aphidicola subsp. Acyrthosiphon pisum (strain APS) (Acyrthosiphon pisum symbiotic bacterium), this protein is Methionine aminopeptidase.